The chain runs to 322 residues: Putative nickel/cobalt efflux system HI_1248 (322 aa).

6 helical membrane-spanning segments follow: residues 7 to 27 (GLVL…WFFL), 54 to 74 (AGTT…LGPG), 100 to 120 (LSSL…VVVL), 137 to 157 (TALL…LRAY), 228 to 248 (IFVL…LAVL), and 294 to 314 (LIAG…TTIS).

The protein belongs to the NiCoT transporter (TC 2.A.52) family.

The protein resides in the cell membrane. Efflux system for nickel and cobalt. The polypeptide is Putative nickel/cobalt efflux system HI_1248 (Haemophilus influenzae (strain ATCC 51907 / DSM 11121 / KW20 / Rd)).